The following is a 444-amino-acid chain: Ribosome biogenesis protein WDR12 homolog (444 aa).

The segment at 7–87 is ubiquitin-like (UBL) domain; that stretch reads VLVKFVTKLP…ESTLEVEYVP (81 aa). A disordered region spans residues 91 to 123; it reads PPQQKNSTPHDDWVSSVDGSRCAPASSSGGSPS. WD repeat units lie at residues 105-148, 150-191, and 203-242; these read SSVD…VASV, AHAG…EEDA, and GHEDGVEAVAASPSGRRFASCGWDGKLLVWEGGEQLRWAA. Residues 243–264 form a disordered region; sequence GTAEASKKKRKTGTANGSAAAG. WD repeat units follow at residues 272-310, 312-352, 360-400, and 403-444; these read GHLHCVSSVAWPAENSLFSGGWDHSVRRWDVSSGAAADT, NGSK…GSDA, AHGG…PLGM, and HHTD…YIVS.

The protein belongs to the WD repeat WDR12/YTM1 family.

Its subcellular location is the nucleus. It localises to the nucleolus. The protein resides in the nucleoplasm. Required for maturation of ribosomal RNAs and formation of the large ribosomal subunit. The sequence is that of Ribosome biogenesis protein WDR12 homolog from Chlamydomonas reinhardtii (Chlamydomonas smithii).